The primary structure comprises 1338 residues: Vascular endothelial growth factor receptor 1 (1338 aa).

Residues 1 to 26 (MVSYWDTGVLLCALLSCLLLTGSSSG) form the signal peptide. Residues 27–758 (SKLKDPELSL…QGTSDKSNLE (732 aa)) lie on the Extracellular side of the membrane. Ig-like C2-type domains lie at 32-123 (PELS…TESA), 151-214 (GREL…VNGH), 230-327 (IDVQ…TSVH), 335-421 (TVKH…LTAT), 428-553 (PQIY…FYIT), 556-654 (PNGF…KEIT), and 661-747 (PYLL…AYLT). 2 disulfides stabilise this stretch: cysteine 53–cysteine 107 and cysteine 158–cysteine 207. N-linked (GlcNAc...) asparagine glycosylation is found at asparagine 100, asparagine 164, asparagine 196, and asparagine 251. Cysteine 252 and cysteine 311 are joined by a disulfide. Asparagine 323, asparagine 402, asparagine 417, asparagine 474, asparagine 547, asparagine 597, asparagine 620, asparagine 625, and asparagine 666 each carry an N-linked (GlcNAc...) asparagine glycan. A disulfide bond links cysteine 454 and cysteine 535. A disulfide bond links cysteine 577 and cysteine 636. Cysteine 682 and cysteine 731 form a disulfide bridge. Residues 759 to 780 (LITLTCTCVAATLFWLLLTLFI) form a helical membrane-spanning segment. Residues 781–1338 (RKMKRSSSEI…SVVLYSTPPI (558 aa)) are Cytoplasmic-facing. The Protein kinase domain occupies 827–1158 (LKLGKSLGRG…ELVEKLGDLL (332 aa)). Residues 833-841 (LGRGAFGKV) and lysine 861 contribute to the ATP site. Residue tyrosine 914 is modified to Phosphotyrosine; by autocatalysis. Over residues 940–957 (PKKEKMEPGLEQGKKPRL) the composition is skewed to basic and acidic residues. A disordered region spans residues 940–982 (PKKEKMEPGLEQGKKPRLDSVTSSESFASSGFQEDKSLSDVEE). Polar residues predominate over residues 959–971 (SVTSSESFASSGF). Residue aspartate 1022 is the Proton acceptor of the active site. Tyrosine 1053, tyrosine 1169, tyrosine 1213, tyrosine 1242, tyrosine 1309, tyrosine 1327, and tyrosine 1333 each carry phosphotyrosine; by autocatalysis.

It belongs to the protein kinase superfamily. Tyr protein kinase family. CSF-1/PDGF receptor subfamily. Interacts with VEGFA, VEGFB and PGF. Monomer in the absence of bound VEGFA, VEGFB or PGF. Homodimer in the presence of bound VEGFA, VEGFB and PGF. Can also form a heterodimer with KDR. Interacts (when tyrosine phosphorylated) with CBL, CRK, GRB2, NCK1, PIK3R1, PLCG, PSEN1 and PTPN11. Probably also interacts with PTPRB. Interacts with RACK1. Identified in a complex with CBL and CD2AP. In terms of processing, N-glycosylated. Post-translationally, ubiquitinated after VEGFA-mediated autophosphorylation, leading to proteolytic degradation. Autophosphorylated on tyrosine residues upon ligand binding. Autophosphorylation occurs in trans, i.e. one subunit of the dimeric receptor phosphorylates tyrosine residues on the other subunit. Phosphorylation at Tyr-1169 is important for interaction with PLCG. Phosphorylation at Tyr-1213 is important for interaction with PIK3R1, PTPN11, GRB2, and PLCG. Phosphorylation at Tyr-1333 is important for endocytosis and for interaction with CBL, NCK1 and CRK. Is probably dephosphorylated by PTPRB. In terms of tissue distribution, detected in normal lung, but also in placenta, liver, kidney, heart and brain tissues. Specifically expressed in most of the vascular endothelial cells, and also expressed in peripheral blood monocytes. Isoform 2 is strongly expressed in placenta. Isoform 3 is expressed in corneal epithelial cells (at protein level). Isoform 3 is expressed in vascular smooth muscle cells (VSMC).

It is found in the cell membrane. The protein resides in the endosome. It localises to the secreted. Its subcellular location is the cytoplasm. The catalysed reaction is L-tyrosyl-[protein] + ATP = O-phospho-L-tyrosyl-[protein] + ADP + H(+). Present in an inactive conformation in the absence of bound ligand. Binding of VEGFA, VEGFB or PGF leads to dimerization and activation by autophosphorylation on tyrosine residues. Tyrosine-protein kinase that acts as a cell-surface receptor for VEGFA, VEGFB and PGF, and plays an essential role in the development of embryonic vasculature, the regulation of angiogenesis, cell survival, cell migration, macrophage function, chemotaxis, and cancer cell invasion. Acts as a positive regulator of postnatal retinal hyaloid vessel regression. May play an essential role as a negative regulator of embryonic angiogenesis by inhibiting excessive proliferation of endothelial cells. Can promote endothelial cell proliferation, survival and angiogenesis in adulthood. Its function in promoting cell proliferation seems to be cell-type specific. Promotes PGF-mediated proliferation of endothelial cells, proliferation of some types of cancer cells, but does not promote proliferation of normal fibroblasts (in vitro). Has very high affinity for VEGFA and relatively low protein kinase activity; may function as a negative regulator of VEGFA signaling by limiting the amount of free VEGFA and preventing its binding to KDR. Modulates KDR signaling by forming heterodimers with KDR. Ligand binding leads to the activation of several signaling cascades. Activation of PLCG leads to the production of the cellular signaling molecules diacylglycerol and inositol 1,4,5-trisphosphate and the activation of protein kinase C. Mediates phosphorylation of PIK3R1, the regulatory subunit of phosphatidylinositol 3-kinase, leading to activation of phosphatidylinositol kinase and the downstream signaling pathway. Mediates activation of MAPK1/ERK2, MAPK3/ERK1 and the MAP kinase signaling pathway, as well as of the AKT1 signaling pathway. Phosphorylates SRC and YES1, and may also phosphorylate CBL. Promotes phosphorylation of AKT1 at 'Ser-473'. Promotes phosphorylation of PTK2/FAK1. Functionally, phosphorylates PLCG. Its function is as follows. May function as decoy receptor for VEGFA. In terms of biological role, has a truncated kinase domain; it increases phosphorylation of SRC at 'Tyr-418' by unknown means and promotes tumor cell invasion. This chain is Vascular endothelial growth factor receptor 1 (FLT1), found in Homo sapiens (Human).